Reading from the N-terminus, the 487-residue chain is Catalase (487 aa).

The tract at residues 1 to 20 (MSQRVLTTESGAPVADNQNS) is disordered. Catalysis depends on residues H54 and N127. Y337 is a binding site for heme.

This sequence belongs to the catalase family. The cofactor is heme.

It carries out the reaction 2 H2O2 = O2 + 2 H2O. Decomposes hydrogen peroxide into water and oxygen; serves to protect cells from the toxic effects of hydrogen peroxide. This chain is Catalase (katA), found in Streptomyces coelicolor (strain ATCC BAA-471 / A3(2) / M145).